Consider the following 181-residue polypeptide: UPF0301 protein COXBURSA331_A2219 (181 aa).

The protein belongs to the UPF0301 (AlgH) family.

In Coxiella burnetii (strain RSA 331 / Henzerling II), this protein is UPF0301 protein COXBURSA331_A2219.